The following is a 92-amino-acid chain: Non-specific lipid-transfer protein 1 (92 aa).

4 disulfide bridges follow: Cys4-Cys52, Cys14-Cys28, Cys29-Cys74, and Cys50-Cys88.

This sequence belongs to the plant LTP family. Expressed in seeds and, at very low levels, in pulp of fruit (at protein level).

In terms of biological role, plant non-specific lipid-transfer proteins transfer phospholipids as well as galactolipids across membranes. May play a role in wax or cutin deposition in the cell walls of expanding epidermal cells and certain secretory tissues. The sequence is that of Non-specific lipid-transfer protein 1 from Actinidia deliciosa (Kiwi).